Here is a 717-residue protein sequence, read N- to C-terminus: Photosystem I P700 chlorophyll a apoprotein A1 (717 aa).

Transmembrane regions (helical) follow at residues 59-82 (VFRAHFGQLAIILIWLSGMYFHGA), 145-168 (LYCTAIGALIFAALMLFAGWFHYH), 184-208 (LNHHLAGLLGLGSLSWAGHQVHVSL), 280-298 (TAHHHLAIAILFLIAGHMY), 335-358 (WHAQLALNLAMLGSLTIVVAHHMY), 374-400 (LSLFTHHMWIGGFLIVGAAAHAAIFMV), 422-444 (AIVSHLNWACIFLGFHSFGLYIH), and 520-538 (FLVHHIHAFTIHVTVLILL). Cys-562 and Cys-571 together coordinate [4Fe-4S] cluster. 2 helical membrane passes run 578 to 599 (HVFLGLFWMYNAISVVIFHFSW) and 653 to 675 (LSAYGLLFLGAHXVWAFSLMFLF). His-664 is a binding site for chlorophyll a'. Residues Met-672 and Tyr-680 each coordinate chlorophyll a. Residue Trp-681 coordinates phylloquinone. The chain crosses the membrane as a helical span at residues 713–717 (AVGVA).

Belongs to the PsaA/PsaB family. In terms of assembly, the PsaA/B heterodimer binds the P700 chlorophyll special pair and subsequent electron acceptors. PSI consists of a core antenna complex that captures photons, and an electron transfer chain that converts photonic excitation into a charge separation. The eukaryotic PSI reaction center is composed of at least 11 subunits. P700 is a chlorophyll a/chlorophyll a' dimer, A0 is one or more chlorophyll a, A1 is one or both phylloquinones and FX is a shared 4Fe-4S iron-sulfur center. is required as a cofactor.

The protein localises to the plastid. Its subcellular location is the chloroplast thylakoid membrane. The enzyme catalyses reduced [plastocyanin] + hnu + oxidized [2Fe-2S]-[ferredoxin] = oxidized [plastocyanin] + reduced [2Fe-2S]-[ferredoxin]. In terms of biological role, psaA and PsaB bind P700, the primary electron donor of photosystem I (PSI), as well as the electron acceptors A0, A1 and FX. PSI is a plastocyanin-ferredoxin oxidoreductase, converting photonic excitation into a charge separation, which transfers an electron from the donor P700 chlorophyll pair to the spectroscopically characterized acceptors A0, A1, FX, FA and FB in turn. Oxidized P700 is reduced on the lumenal side of the thylakoid membrane by plastocyanin. In Cycas revoluta (Sago palm), this protein is Photosystem I P700 chlorophyll a apoprotein A1.